The sequence spans 340 residues: GTPase Obg (340 aa).

Residues 1 to 159 enclose the Obg domain; that stretch reads MKFLDQAKVY…RTLWLRLKLI (159 aa). Residues 160–327 enclose the OBG-type G domain; it reads ADAGIIGLPN…LLRAGAHIIE (168 aa). Residues 166–173, 191–195, 212–215, 279–282, and 308–310 each bind GTP; these read GLPNAGKS, FTTLY, DIPG, SQID, and SAV. Residues Ser-173 and Thr-193 each contribute to the Mg(2+) site.

It belongs to the TRAFAC class OBG-HflX-like GTPase superfamily. OBG GTPase family. As to quaternary structure, monomer. The cofactor is Mg(2+).

It is found in the cytoplasm. Functionally, an essential GTPase which binds GTP, GDP and possibly (p)ppGpp with moderate affinity, with high nucleotide exchange rates and a fairly low GTP hydrolysis rate. Plays a role in control of the cell cycle, stress response, ribosome biogenesis and in those bacteria that undergo differentiation, in morphogenesis control. The sequence is that of GTPase Obg from Bartonella henselae (strain ATCC 49882 / DSM 28221 / CCUG 30454 / Houston 1) (Rochalimaea henselae).